The primary structure comprises 549 residues: Probable protein kinase UbiB (549 aa).

A Protein kinase domain is found at Asp-123–Leu-501. ATP is bound by residues Leu-129 to Val-137 and Lys-152. Asp-287 functions as the Proton acceptor in the catalytic mechanism. The next 2 helical transmembrane spans lie at Ser-498–Gln-518 and Ala-520–Trp-540.

The protein belongs to the ABC1 family. UbiB subfamily.

Its subcellular location is the cell inner membrane. Its pathway is cofactor biosynthesis; ubiquinone biosynthesis [regulation]. Functionally, is probably a protein kinase regulator of UbiI activity which is involved in aerobic coenzyme Q (ubiquinone) biosynthesis. The chain is Probable protein kinase UbiB from Shewanella woodyi (strain ATCC 51908 / MS32).